The chain runs to 20 residues: Agglutinin beta-3 chain (20 aa).

The segment at Gly-1–Asn-20 is disordered.

This sequence belongs to the jacalin lectin family. As to quaternary structure, formed of four alpha chains and four beta chains.

D-galactose-specific lectin, binds the T-antigen structure Gal-beta1,3-GalNAc. The protein is Agglutinin beta-3 chain of Maclura pomifera (Osage orange).